Consider the following 181-residue polypeptide: MGQQKPQIRSTTVLGVLRDGKAALGSDGQMTLGNTVMKHSTRKIRSLYQGKFVTGFAGATADALTLLERFEAKLEAYSGRLDRAAVELAKDWRTDKYLRRLEAMLAVVSSDKALIISGTGDVIEPEDGIVAIGSGSMYALAAARALMKHTTLSAEEIVRESLQTAAEICIYTNDHIAIETL.

Thr-11 is an active-site residue. Na(+) contacts are provided by Ala-166, Cys-169, and Thr-172.

It belongs to the peptidase T1B family. HslV subfamily. As to quaternary structure, a double ring-shaped homohexamer of HslV is capped on each side by a ring-shaped HslU homohexamer. The assembly of the HslU/HslV complex is dependent on binding of ATP.

It is found in the cytoplasm. The catalysed reaction is ATP-dependent cleavage of peptide bonds with broad specificity.. With respect to regulation, allosterically activated by HslU binding. Protease subunit of a proteasome-like degradation complex believed to be a general protein degrading machinery. The protein is ATP-dependent protease subunit HslV of Chlorobaculum parvum (strain DSM 263 / NCIMB 8327) (Chlorobium vibrioforme subsp. thiosulfatophilum).